We begin with the raw amino-acid sequence, 162 residues long: ATP synthase subunit delta, mitochondrial (162 aa).

The N-terminal 25 residues, 1 to 25 (MSSLRLLASAARRATTHVAYTRRGY), are a transit peptide targeting the mitochondrion.

Belongs to the ATPase epsilon chain family. In terms of assembly, F-type ATPases have 2 components, CF(1) - the catalytic core - and CF(0) - the membrane proton channel. CF(1) has five subunits: alpha(3), beta(3), gamma(1), delta(1), epsilon(1). CF(0) has three main subunits: a, b and c.

It localises to the mitochondrion. The protein resides in the mitochondrion inner membrane. Its function is as follows. Mitochondrial membrane ATP synthase (F(1)F(0) ATP synthase or Complex V) produces ATP from ADP in the presence of a proton gradient across the membrane which is generated by electron transport complexes of the respiratory chain. F-type ATPases consist of two structural domains, F(1) - containing the extramembraneous catalytic core, and F(0) - containing the membrane proton channel, linked together by a central stalk and a peripheral stalk. During catalysis, ATP turnover in the catalytic domain of F(1) is coupled via a rotary mechanism of the central stalk subunits to proton translocation. Part of the complex F(1) domain and of the central stalk which is part of the complex rotary element. Rotation of the central stalk against the surrounding alpha(3)beta(3) subunits leads to hydrolysis of ATP in three separate catalytic sites on the beta subunits. This is ATP synthase subunit delta, mitochondrial (atpD) from Agaricus bisporus (White button mushroom).